Consider the following 132-residue polypeptide: Small ribosomal subunit protein uS8c (132 aa).

It belongs to the universal ribosomal protein uS8 family. As to quaternary structure, part of the 30S ribosomal subunit.

The protein localises to the plastid. It localises to the chloroplast. Functionally, one of the primary rRNA binding proteins, it binds directly to 16S rRNA central domain where it helps coordinate assembly of the platform of the 30S subunit. This is Small ribosomal subunit protein uS8c (rps8) from Liriodendron tulipifera (Tuliptree).